A 220-amino-acid polypeptide reads, in one-letter code: Miraculin (220 aa).

Residues 1–29 form the signal peptide; sequence MKELTMLSLSFFFVSALLAAAANPLLSAA. An N-linked (GlcNAc...) asparagine glycan is attached at Asn71. Cystine bridges form between Cys76/Cys121, Cys177/Cys188, and Cys181/Cys184. The N-linked (GlcNAc...) asparagine glycan is linked to Asn215.

This sequence belongs to the protease inhibitor I3 (leguminous Kunitz-type inhibitor) family. Homotetramer; dimer of homodimer. Post-translationally, glycosylated; contains as much as 13,9% of sugars (glucosamine, mannose, galactose, xylose, and fucose). Expressed in fruit pulp after pollination. Not expressed in seeds, stems or leaves.

In terms of biological role, miraculin has the property of modifying a sour taste into a sweet taste. This alteration of taste perception persists for many minutes. The protein is Miraculin of Synsepalum dulcificum (Miracle fruit).